We begin with the raw amino-acid sequence, 350 residues long: RNA 3'-terminal phosphate cyclase (350 aa).

ATP is bound by residues Gln100 and 290–294 (FLGDQ). Residue His314 is the Tele-AMP-histidine intermediate of the active site.

Belongs to the RNA 3'-terminal cyclase family. Type 1 subfamily.

It localises to the cytoplasm. The enzyme catalyses a 3'-end 3'-phospho-ribonucleotide-RNA + ATP = a 3'-end 2',3'-cyclophospho-ribonucleotide-RNA + AMP + diphosphate. In terms of biological role, catalyzes the conversion of 3'-phosphate to a 2',3'-cyclic phosphodiester at the end of RNA. The mechanism of action of the enzyme occurs in 3 steps: (A) adenylation of the enzyme by ATP; (B) transfer of adenylate to an RNA-N3'P to produce RNA-N3'PP5'A; (C) and attack of the adjacent 2'-hydroxyl on the 3'-phosphorus in the diester linkage to produce the cyclic end product. The biological role of this enzyme is unknown but it is likely to function in some aspects of cellular RNA processing. The protein is RNA 3'-terminal phosphate cyclase of Thermococcus sibiricus (strain DSM 12597 / MM 739).